Here is a 119-residue protein sequence, read N- to C-terminus: Hemerythrin subunit B (119 aa).

Fe cation-binding residues include His26, His55, Glu59, His74, His78, His107, and Asp112.

This sequence belongs to the hemerythrin family.

Hemerythrin is a respiratory protein in blood cells of certain marine worms. The oxygen-binding site in each chain contains two iron atoms. The polypeptide is Hemerythrin subunit B (Sipunculus nudus (Sipunculan worm)).